Reading from the N-terminus, the 246-residue chain is Ribonuclease 3 (246 aa).

Residues 16–146 (ATELEAGIGY…LLAAVYLDGG (131 aa)) enclose the RNase III domain. Glutamate 59 is a Mg(2+) binding site. Aspartate 63 is an active-site residue. 2 residues coordinate Mg(2+): asparagine 132 and glutamate 135. Glutamate 135 is a catalytic residue. A DRBM domain is found at 173–242 (DFKTEFQEMV…ARQVLARFAA (70 aa)).

Belongs to the ribonuclease III family. As to quaternary structure, homodimer. Mg(2+) is required as a cofactor.

It localises to the cytoplasm. It catalyses the reaction Endonucleolytic cleavage to 5'-phosphomonoester.. Digests double-stranded RNA. Involved in the processing of primary rRNA transcript to yield the immediate precursors to the large and small rRNAs (23S and 16S). Processes some mRNAs, and tRNAs when they are encoded in the rRNA operon. Processes pre-crRNA and tracrRNA of type II CRISPR loci if present in the organism. The chain is Ribonuclease 3 from Geobacter metallireducens (strain ATCC 53774 / DSM 7210 / GS-15).